The primary structure comprises 179 residues: Sperm surface protein Sp17 (179 aa).

Basic and acidic residues predominate over residues 72–109; it reads HAFKDEPPEKSETQKIQPEKVAIEKETMPQETVKEKET. Disordered stretches follow at residues 72 to 138 and 159 to 179; these read HAFK…EGLL and TRKE…ENNE. Residues 116–135 are compositionally biased toward acidic residues; the sequence is EPTEEPQKEEEEEEDEEDLE. An IQ domain is found at 143 to 172; sequence MQDAAVKIQAVFRGHKTRKEYLKKRDSTDE. A compositionally biased stretch (basic and acidic residues) spans 161 to 170; sequence KEYLKKRDST.

In terms of assembly, homodimer. May interact with ROPN1. Testis- and sperm-specific.

The protein resides in the membrane. Functionally, sperm surface zona pellucida binding protein. Helps to bind spermatozoa to the zona pellucida with high affinity. Might function in binding zona pellucida and carbohydrates. This is Sperm surface protein Sp17 (SPA17) from Monodelphis domestica (Gray short-tailed opossum).